The following is a 3414-amino-acid chain: Genome polyprotein (3414 aa).

Residues 1 to 27 form a disordered region; sequence MAGKAVLKGKGGGPPRRASKVAPKKTR. The Cytoplasmic portion of the chain corresponds to 1 to 98; it reads MAGKAVLKGK…LHRRGSRRTT (98 aa). The segment covering 17-27 has biased composition (basic residues); that stretch reads RASKVAPKKTR. Positions 97-117 are cleaved as a propeptide — ER anchor for the capsid protein C, removed in mature form by serine protease NS3; sequence TTIDWMTPLLITVMLGMCLTA. A helical membrane pass occupies residues 99–117; that stretch reads IDWMTPLLITVMLGMCLTA. Residues 118 to 242 lie on the Extracellular side of the membrane; that stretch reads TVRRERDGSM…HLTRVEGWVW (125 aa). Asparagine 144 carries N-linked (GlcNAc...) asparagine; by host glycosylation. Residues 243 to 260 form a helical membrane-spanning segment; it reads KNKLFTLSLVMVAWLMVD. Residue glycine 261 is a topological domain, cytoplasmic. Residues 262–280 traverse the membrane as a helical segment; it reads LLPRILIVVVALALVPAYA. Residues 281-727 are Extracellular-facing; that stretch reads SRCTHLENRD…HTVLGGAFNT (447 aa). Intrachain disulfides connect cysteine 283/cysteine 310, cysteine 340/cysteine 396, cysteine 340/cysteine 401, cysteine 354/cysteine 385, cysteine 372/cysteine 396, and cysteine 372/cysteine 401. The tract at residues 378–391 is fusion peptide; it reads DRGWGNHCGLFGKG. A glycan (N-linked (GlcNAc...) asparagine; by host) is linked at asparagine 434. Disulfide bonds link cysteine 466-cysteine 570 and cysteine 587-cysteine 618. Residues 728–748 traverse the membrane as a helical segment; the sequence is LLGGVGFLPKILLGVAMAWLG. The Cytoplasmic segment spans residues 749-755; that stretch reads LNMRNPT. The chain crosses the membrane as a helical span at residues 756-776; the sequence is LSMGFLLSGGLVLAMTLGVGA. Residues 777–1187 lie on the Extracellular side of the membrane; that stretch reads DVGCAVDTER…LVSVESLFRY (411 aa). Cystine bridges form between cysteine 780-cysteine 791, cysteine 831-cysteine 920, cysteine 955-cysteine 1000, cysteine 1057-cysteine 1106, cysteine 1068-cysteine 1090, and cysteine 1089-cysteine 1093. 3 N-linked (GlcNAc...) asparagine; by host glycosylation sites follow: asparagine 861, asparagine 983, and asparagine 999. The chain crosses the membrane as a helical span at residues 1188–1208; it reads LVAVGLVFQLELGPEAVAMVL. Residues 1209–1232 are Cytoplasmic-facing; the sequence is LQAVFEMRTCLLSGFVLRRSITTR. A helical membrane pass occupies residues 1233–1253; the sequence is EIVTVYFLLLVLEMGIPVKGL. The Lumenal segment spans residues 1254–1267; it reads EHLWRWTDALAMGA. A helical transmembrane segment spans residues 1268–1288; it reads IIFRACTAEGKTGIGLLLAAF. The Cytoplasmic segment spans residues 1289 to 1300; that stretch reads MTQSDMNIIHDG. Residues 1301-1319 traverse the membrane as a helical segment; the sequence is LTAFLCVATTMAIWRYIRG. Residues 1320–1325 are Lumenal-facing; that stretch reads QGERKG. A helical membrane pass occupies residues 1326–1346; it reads LTWIVPLAGILGGEGSGVRLL. Residues 1347–1359 are Cytoplasmic-facing; that stretch reads AFWELAASRGRRS. Residues 1360-1378 form a helical membrane-spanning segment; the sequence is FNEPMTVIGVMLTLASGMM. Residues 1379-1382 are Lumenal-facing; that stretch reads RHTS. The helical transmembrane segment at 1383-1403 threads the bilayer; it reads QEAVCAMALAAFLLLMLTLGT. Over 1404–1454 the chain is Cytoplasmic; it reads RKMQLLAEWSGNIEWNPELTSEGGEVSLRVRQDALGNLHLTELEKEERMMA. The interacts with and activates NS3 protease stretch occupies residues 1410–1449; it reads AEWSGNIEWNPELTSEGGEVSLRVRQDALGNLHLTELEKE. Positions 1455–1475 form an intramembrane region, helical; sequence FWLVVGLIASAFHWSGILIVM. The Cytoplasmic portion of the chain corresponds to 1476 to 2160; that stretch reads GLWTISEMLG…RIGERDAPEA (685 aa). The Peptidase S7 domain maps to 1490–1669; the sequence is TDLVFSGCSE…EVEKSRPNLP (180 aa). Active-site charge relay system; for serine protease NS3 activity residues include histidine 1543, aspartate 1567, and serine 1627. The 157-residue stretch at 1675 to 1831 folds into the Helicase ATP-binding domain; sequence TGWTAKGQIT…ESNGAIASEE (157 aa). 1688–1695 serves as a coordination point for ATP; it reads MHPGSGKT. Residues 1779-1782 carry the DEAH box motif; sequence DEAH. Residues 1841 to 2000 enclose the Helicase C-terminal domain; the sequence is DGFDWITEYE…TARGPVATFY (160 aa). The residue at position 1883 (lysine 1883) is an N6-acetyllysine; by host. A helical membrane pass occupies residues 2161–2181; the sequence is FLTAVEMLVLGLATLGVVWCF. Residues 2182–2189 are Lumenal-facing; sequence VVRTSVSR. Residues 2190–2209 constitute an intramembrane region (helical); it reads MVLGTLVLATSLIFLWAGGV. Position 2210 (glycine 2210) is a topological domain, lumenal. Residues 2211–2231 traverse the membrane as a helical segment; sequence YGNMAGVALVFYTLLTVLQPE. The Cytoplasmic portion of the chain corresponds to 2232–2238; the sequence is TGKQRSS. Residues 2239-2259 traverse the membrane as a helical segment; that stretch reads DDNKLAYFLLTLCGLAGMVAA. The Lumenal portion of the chain corresponds to 2260-2296; that stretch reads NEMGLLEKTKADLAALFARDQGETVRWGEWTNLDIQP. Residues 2297–2315 constitute an intramembrane region (helical); the sequence is ARSWGTYVLVVSLFTPYML. Residues 2316 to 2343 lie on the Lumenal side of the membrane; that stretch reads HQLQTRIQQLVNSAVASGAQAMRDLGGG. An intramembrane region (helical) is located at residues 2344-2364; it reads TPFFGVAGHVLALGVASLVGA. Residues 2365-2368 are Lumenal-facing; it reads TPTS. The chain crosses the membrane as a helical span at residues 2369–2389; that stretch reads LILGVGLAAFHLAIVVSGLEA. At 2390–2432 the chain is on the cytoplasmic side; the sequence is ELTQRAHKVFFSAMVRNPMVDGDVINPFGDGEAKPALYERKLS. Residues 2433 to 2453 form a helical membrane-spanning segment; the sequence is LILALVLCLASVVMNRTFVAV. Over 2454–2477 the chain is Lumenal; the sequence is TEAGAVGVAAAMQLLRPEMDVLWT. Residues 2478–2498 form a helical membrane-spanning segment; the sequence is MPVACGMSGVVRGSLWGLLPL. Over 2499–3414 the chain is Cytoplasmic; it reads GHRLWLRTTG…WELKLESSIF (916 aa). The 265-residue stretch at 2512-2776 folds into the mRNA cap 0-1 NS5-type MT domain; it reads GGSEGDTLGD…EIDLGVGTRS (265 aa). S-adenosyl-L-methionine is bound at residue serine 2567. Position 2567 is a phosphoserine (serine 2567). Residue lysine 2572 is the For 2'-O-MTase activity of the active site. 6 residues coordinate S-adenosyl-L-methionine: glycine 2597, tryptophan 2598, threonine 2615, isoleucine 2616, aspartate 2642, and valine 2643. Aspartate 2657 functions as the For 2'-O-MTase activity in the catalytic mechanism. Isoleucine 2658 serves as a coordination point for S-adenosyl-L-methionine. Catalysis depends on for 2'-O-MTase activity residues lysine 2694 and glutamate 2730. The interaction with host SCRIB stretch occupies residues 2730–2734; it reads EMYFS. Tyrosine 2732 is an S-adenosyl-L-methionine binding site. Glutamate 2950, histidine 2954, cysteine 2959, and cysteine 2962 together coordinate Zn(2+). Residues 3040-3189 form the RdRp catalytic domain; that stretch reads GLFYADDTAG…RPVDDRFSKA (150 aa). Residues histidine 3224, cysteine 3240, and cysteine 3359 each contribute to the Zn(2+) site.

It in the N-terminal section; belongs to the class I-like SAM-binding methyltransferase superfamily. mRNA cap 0-1 NS5-type methyltransferase family. As to quaternary structure, homodimer. Interacts (via N-terminus) with host EXOC1 (via C-terminus); this interaction results in EXOC1 degradation through the proteasome degradation pathway. In terms of assembly, forms heterodimers with envelope protein E in the endoplasmic reticulum and Golgi. Homodimer; in the endoplasmic reticulum and Golgi. Interacts with protein prM. Interacts with non-structural protein 1. As to quaternary structure, homodimer; Homohexamer when secreted. Interacts with envelope protein E. In terms of assembly, interacts (via N-terminus) with serine protease NS3. Forms a heterodimer with serine protease NS3. May form homooligomers. As to quaternary structure, forms a heterodimer with NS2B. Interacts with non-structural protein 2A (via N-terminus). Interacts with NS4B. Interacts with unphosphorylated RNA-directed RNA polymerase NS5; this interaction stimulates RNA-directed RNA polymerase NS5 guanylyltransferase activity. In terms of assembly, interacts with serine protease NS3. Interacts with NS1. Homodimer. Interacts with host STAT2; this interaction inhibits the phosphorylation of the latter, and, when all viral proteins are present (polyprotein), targets STAT2 for degradation. Interacts with serine protease NS3. Interacts with host SCRIB; this interaction targets NS5 to the cell membrane periphery and nucleus, thereby allowing efficient host nuclear STAT1 inhibition. In terms of processing, specific enzymatic cleavages in vivo yield mature proteins. Cleavages in the lumen of endoplasmic reticulum are performed by host signal peptidase, whereas cleavages in the cytoplasmic side are performed by serine protease NS3. Signal cleavage at the 2K-4B site requires a prior NS3 protease-mediated cleavage at the 4A-2K site. Post-translationally, cleaved in post-Golgi vesicles by a host furin, releasing the mature small envelope protein M, and peptide pr. This cleavage is incomplete as up to 30% of viral particles still carry uncleaved prM. N-glycosylated. In terms of processing, N-glycosylated. The excreted form is glycosylated and this is required for efficient secretion of the protein from infected cells. Post-translationally, acetylated by host KAT5. Acetylation modulates NS3 RNA-binding and unwinding activities and plays an important positive role for viral replication. Phosphorylated on serines residues. This phosphorylation may trigger NS5 nuclear localization.

It localises to the virion. It is found in the host nucleus. The protein localises to the host cytoplasm. Its subcellular location is the host perinuclear region. The protein resides in the secreted. It localises to the virion membrane. It is found in the host endoplasmic reticulum membrane. The catalysed reaction is Selective hydrolysis of -Xaa-Xaa-|-Yaa- bonds in which each of the Xaa can be either Arg or Lys and Yaa can be either Ser or Ala.. The enzyme catalyses RNA(n) + a ribonucleoside 5'-triphosphate = RNA(n+1) + diphosphate. It catalyses the reaction a ribonucleoside 5'-triphosphate + H2O = a ribonucleoside 5'-diphosphate + phosphate + H(+). It carries out the reaction ATP + H2O = ADP + phosphate + H(+). The catalysed reaction is a 5'-end (5'-triphosphoguanosine)-ribonucleoside in mRNA + S-adenosyl-L-methionine = a 5'-end (N(7)-methyl 5'-triphosphoguanosine)-ribonucleoside in mRNA + S-adenosyl-L-homocysteine. The enzyme catalyses a 5'-end (N(7)-methyl 5'-triphosphoguanosine)-ribonucleoside in mRNA + S-adenosyl-L-methionine = a 5'-end (N(7)-methyl 5'-triphosphoguanosine)-(2'-O-methyl-ribonucleoside) in mRNA + S-adenosyl-L-homocysteine + H(+). Functionally, plays a role in virus budding by binding to membrane and gathering the viral RNA into a nucleocapsid that forms the core of a mature virus particle. During virus entry, may induce genome penetration in host cytoplasm after hemifusion induced by surface proteins. Can migrate to the cell nucleus where it modulates host functions. In terms of biological role, inhibits RNA silencing by interfering with host Dicer. Prevents premature fusion activity of envelope proteins in trans-Golgi by binding to envelope protein E at pH6.0. After virion release in extracellular space gets dissociated from E dimers. Its function is as follows. Acts as a chaperone for envelope protein E during intracellular virion assembly by masking and inactivating envelope protein E fusion peptide. prM is the only viral peptide matured by host furin in the trans-Golgi network. Presumably to avoid catastrophic activation of the viral fusion activity in acidic GolGi compartment prior to virion release. prM-E cleavage is ineficient, and many virions are only partially matured. These uncleaved prM would play a role in immune evasion. Functionally, may play a role in virus budding. Exerts cytotoxic effects by activating a mitochondrial apoptotic pathway through M extodomain. May display a viroporin activity. In terms of biological role, binds to host cell surface receptor and mediates fusion between viral and cellular membranes. Envelope protein is synthesized in the endoplasmic reticulum in the form of heterodimer with protein prM. They play a role in virion budding in the ER, and the newly formed immature particle is covered with 60 spikes composed of heterodimer between precursor prM and envelope protein E. The virion is transported to the Golgi apparatus where the low pH causes dissociation of PrM-E heterodimers and formation of E homodimers. prM-E cleavage is ineficient, and many virions are only partially matured. These uncleaved prM would play a role in immune evasion. Involved in immune evasion, pathogenesis and viral replication. Once cleaved off the polyprotein, is targeted to three destinations: the viral replication cycle, the plasma membrane and the extracellular compartment. Essential for viral replication. Required for formation of the replication complex and recruitment of other non-structural proteins to the ER-derived membrane structures. Excreted as a hexameric lipoparticle that plays a role against host immune response. Antagonizing the complement function. Binds to the host macrophages and dendritic cells. Inhibits signal transduction originating from Toll-like receptor 3 (TLR3). Its function is as follows. Component of the viral RNA replication complex that functions in virion assembly and antagonizes the host immune response. Functionally, required cofactor for the serine protease function of NS3. May have membrane-destabilizing activity and form viroporins. In terms of biological role, displays three enzymatic activities: serine protease, NTPase and RNA helicase. NS3 serine protease, in association with NS2B, performs its autocleavage and cleaves the polyprotein at dibasic sites in the cytoplasm: C-prM, NS2A-NS2B, NS2B-NS3, NS3-NS4A, NS4A-2K and NS4B-NS5. NS3 RNA helicase binds RNA and unwinds dsRNA in the 3' to 5' direction. Regulates the ATPase activity of the NS3 helicase activity. NS4A allows NS3 helicase to conserve energy during unwinding. Its function is as follows. Functions as a signal peptide for NS4B and is required for the interferon antagonism activity of the latter. Functionally, induces the formation of ER-derived membrane vesicles where the viral replication takes place. Inhibits interferon (IFN)-induced host STAT1 phosphorylation and nuclear translocation, thereby preventing the establishment of cellular antiviral state by blocking the IFN-alpha/beta pathway. Inhibits STAT2 translocation in the nucleus after IFN-alpha treatment. In terms of biological role, replicates the viral (+) and (-) genome, and performs the capping of genomes in the cytoplasm. NS5 methylates viral RNA cap at guanine N-7 and ribose 2'-O positions. Besides its role in genome replication, also prevents the establishment of cellular antiviral state by blocking the interferon-alpha/beta (IFN-alpha/beta) signaling pathway. Inhibits host TYK2 and STAT2 phosphorylation, thereby preventing activation of JAK-STAT signaling pathway. This chain is Genome polyprotein, found in Homo sapiens (Human).